Reading from the N-terminus, the 218-residue chain is MALVPYTETAEMGLQRFHKPLATFSFANHTIQIRQDWKQLGVAAVVWDAAVVLATYLEMGTVELRGCSAVELGAGTGLVGIVAALLGAHVTITDRKVALEFLKSNVQANLPPHIQPKAVVKELTWGQNLGRFSPGEFDLILGADIIYLEETFTDLLQTLEHLCSNHSVVLLACRIRYERDYNFLAMLERQFTVSKVHYDSEKDVHIYKAQRRCLREDL.

S-adenosyl-L-methionine-binding positions include tryptophan 47, 73–75 (GAG), aspartate 94, tryptophan 125, and alanine 143.

Belongs to the methyltransferase superfamily. METTL21 family. As to quaternary structure, interacts with heat shock 70 family members; at least some of these proteins are methylation substrates.

The protein resides in the cytoplasm. It catalyses the reaction L-lysyl-[protein] + 3 S-adenosyl-L-methionine = N(6),N(6),N(6)-trimethyl-L-lysyl-[protein] + 3 S-adenosyl-L-homocysteine + 3 H(+). Functionally, protein-lysine methyltransferase that selectively trimethylates residues in heat shock protein 70 (HSP70) family members. Contributes to the in vivo trimethylation of Lys residues in HSPA1 and HSPA8. In vitro methylates 'Lys-561' in HSPA1, 'Lys-564' in HSPA2, 'Lys-585' in HSPA5, 'Lys-563' in HSPA6 and 'Lys-561' in HSPA8. This Bos taurus (Bovine) protein is Protein N-lysine methyltransferase METTL21A (METTL21A).